The following is a 101-amino-acid chain: Peroxisomal biogenesis factor 39 (101 aa).

It is found in the peroxisome. In terms of biological role, may be a peroxin involved in the PTS2-mediated protein import pathway. The chain is Peroxisomal biogenesis factor 39 from Homo sapiens (Human).